The primary structure comprises 230 residues: LexA repressor (230 aa).

Residues 28 to 48 (IREIGEALDIRSTNGVNDHLK) constitute a DNA-binding region (H-T-H motif). Active-site for autocatalytic cleavage activity residues include Ser-148 and Lys-185.

This sequence belongs to the peptidase S24 family. Homodimer.

It catalyses the reaction Hydrolysis of Ala-|-Gly bond in repressor LexA.. Represses a number of genes involved in the response to DNA damage (SOS response), including recA and lexA. In the presence of single-stranded DNA, RecA interacts with LexA causing an autocatalytic cleavage which disrupts the DNA-binding part of LexA, leading to derepression of the SOS regulon and eventually DNA repair. The chain is LexA repressor from Anaeromyxobacter sp. (strain K).